The sequence spans 492 residues: NADH-quinone oxidoreductase subunit N (492 aa).

Transmembrane regions (helical) follow at residues 13–33 (MMTP…MDLF), 42–62 (PLAW…IGLI), 79–99 (FGKA…LLAF), 111–131 (GEFY…ASSG), 133–153 (LITL…LAGI), 168–188 (VING…IFGL), 211–231 (YILA…ISSV), 251–271 (FLSV…FITI), 284–304 (SLLF…MIIG), 318–340 (FAYS…SWVM), 344–366 (IWFY…QRIS), 388–408 (AVAM…AGFI), 426–446 (VLAA…FGIF), and 463–483 (PIGL…FGVV).

Belongs to the complex I subunit 2 family. As to quaternary structure, NDH-1 is composed of 14 different subunits. Subunits NuoA, H, J, K, L, M, N constitute the membrane sector of the complex.

It is found in the cell membrane. The enzyme catalyses a quinone + NADH + 5 H(+)(in) = a quinol + NAD(+) + 4 H(+)(out). Its function is as follows. NDH-1 shuttles electrons from NADH, via FMN and iron-sulfur (Fe-S) centers, to quinones in the respiratory chain. The immediate electron acceptor for the enzyme in this species is believed to be a menaquinone. Couples the redox reaction to proton translocation (for every two electrons transferred, four hydrogen ions are translocated across the cytoplasmic membrane), and thus conserves the redox energy in a proton gradient. The sequence is that of NADH-quinone oxidoreductase subunit N from Geobacillus sp. (strain WCH70).